The sequence spans 149 residues: Protein OPG200 (149 aa).

The protein belongs to the orthopoxvirus OPG200 family. In terms of assembly, homodimers. Interacts with host IKBKB; this interaction inhibits host NF-kappa-B activation.

Its function is as follows. Contributes to virulence by binding to the host IKBKB subunit of the IKK complex and preventing host NF-kappa-B activation in response to pro-inflammatory stimuli such as TNF-alpha or IL1B. Mechanistically, sterically hinders the direct contact between the kinase domains of IKBKB in the IKK complex containing IKBKB, CHUK/IKKA and NEMO. In Vaccinia virus (strain Western Reserve) (VACV), this protein is Protein OPG200 (OPG200).